The following is a 370-amino-acid chain: NAD-dependent histone deacetylase HST4 (370 aa).

Residues 1–27 (MKQKFVLPITPPSTAEKKPQTENRCNE) form a disordered region. Positions 15–27 (AEKKPQTENRCNE) are enriched in basic and acidic residues. In terms of domain architecture, Deacetylase sirtuin-type spans 75-370 (RHHMDRDAGF…GDCQHVTSLL (296 aa)). NAD(+)-binding positions include 100 to 119 (GAGISVAAGIPDFRSSEGIF) and 184 to 187 (QNID). His213 (proton acceptor) is an active-site residue. Residues Cys221, Cys224, Cys251, and Cys254 each coordinate Zn(2+). NAD(+) contacts are provided by residues 310 to 312 (GTS), 340 to 342 (NTS), and Cys363.

Belongs to the sirtuin family. Class I subfamily. Zn(2+) is required as a cofactor.

The protein resides in the nucleus. It carries out the reaction N(6)-acetyl-L-lysyl-[protein] + NAD(+) + H2O = 2''-O-acetyl-ADP-D-ribose + nicotinamide + L-lysyl-[protein]. In terms of biological role, NAD-dependent histone deacetylase, which contributes together with HST3 to histone H3 'Lys-56' deacetylation, regulation of telomeric silencing, proper cell cycle progression, DNA damage control, DNA recombination, and genomic maintenance. This Saccharomyces cerevisiae (strain ATCC 204508 / S288c) (Baker's yeast) protein is NAD-dependent histone deacetylase HST4 (HST4).